Consider the following 107-residue polypeptide: MSQDTVEIRVEFGGGTELLLAPPHEKKHTLTIPRTDTAGNETNVSFLIGHIRKNLITEREELFVDGDSVRPGILVLINNGDWELEGEGDYVLQDGDEVVFISTLHGG.

Gly107 carries the post-translational modification 1-thioglycine. Residue Gly107 forms a Glycyl lysine isopeptide (Gly-Lys) (interchain with K-? in acceptor proteins) linkage.

Belongs to the URM1 family. In terms of processing, C-terminal thiocarboxylation occurs in 2 steps, it is first acyl-adenylated (-COAMP) via the hesA/moeB/thiF part of UBA4, then thiocarboxylated (-COSH) via the rhodanese domain of UBA4.

It is found in the cytoplasm. It participates in tRNA modification; 5-methoxycarbonylmethyl-2-thiouridine-tRNA biosynthesis. Its function is as follows. Acts as a sulfur carrier required for 2-thiolation of mcm(5)S(2)U at tRNA wobble positions of cytosolic tRNA(Lys), tRNA(Glu) and tRNA(Gln). Serves as sulfur donor in tRNA 2-thiolation reaction by being thiocarboxylated (-COSH) at its C-terminus by the MOCS3 homolog UBA4. The sulfur is then transferred to tRNA to form 2-thiolation of mcm(5)S(2)U. Prior mcm(5) tRNA modification by the elongator complex is required for 2-thiolation. Also acts as a ubiquitin-like protein (UBL) that is covalently conjugated via an isopeptide bond to lysine residues of target proteins such as AHP1. The thiocarboxylated form serves as substrate for conjugation and oxidative stress specifically induces the formation of UBL-protein conjugates. The protein is Ubiquitin-related modifier 1 of Mycosarcoma maydis (Corn smut fungus).